Reading from the N-terminus, the 462-residue chain is Squalene synthase LSS (462 aa).

The NADP(+) site is built by Arg48 and Arg73. 3 residues coordinate Mg(2+): Asp76, Glu79, and Asp80. Arg214, Lys314, and Arg316 together coordinate NADP(+). Helical transmembrane passes span 399–419 and 436–456; these read LVLV…PLLW and LGLP…YQVF.

It belongs to the phytoene/squalene synthase family. It depends on Mg(2+) as a cofactor.

The protein localises to the membrane. The enzyme catalyses 2 (2E,6E)-farnesyl diphosphate + NADH + H(+) = squalene + 2 diphosphate + NAD(+). The catalysed reaction is 2 (2E,6E)-farnesyl diphosphate + NADPH + H(+) = squalene + 2 diphosphate + NADP(+). Its function is as follows. Converts farnesyl diphosphate (FPP) into squalene, a precursor for sterol biosynthesis in eukaryotes. In Botryococcus braunii (Green alga), this protein is Squalene synthase LSS.